The chain runs to 1027 residues: Fibril-forming collagen alpha chain (1027 aa).

The tract at residues 1-12 (YRAGPRYIQAQV) is nonhelical region (N-terminal). Residues 1 to 1027 (YRAGPRYIQA…GPPGNSDYGA (1027 aa)) form a disordered region. The triple-helical region stretch occupies residues 13–1023 (GPIGPRGPPG…PGPPGPPGNS (1011 aa)). Pro residues predominate over residues 17–26 (PRGPPGPPGS). 4-hydroxyproline; partial is present on residues Pro21 and Pro24. Pro27 and Pro39 each carry 4-hydroxyproline. Position 53 is a 3-hydroxyproline; partial (Pro53). Pro54 carries the post-translational modification 4-hydroxyproline. The span at 63-72 (SGDDGRDGEP) shows a compositional bias: basic and acidic residues. Pro72 is modified (4-hydroxyproline; partial). A compositionally biased stretch (gly residues) spans 73-91 (GPRGGIGPMGPRGAGGMPG). A 4-hydroxyproline mark is found at Pro90 and Pro93. A 5-hydroxylysine mark is found at Lys96 and Lys108. O-linked (Gal...) hydroxylysine glycosylation is found at Lys96 and Lys108. Pro123 and Pro128 each carry 4-hydroxyproline; partial. At Pro150 the chain carries 4-hydroxyproline. At Pro161 the chain carries 3-hydroxyproline; partial. 4-hydroxyproline is present on Pro162. Position 164 is a 3-hydroxyproline; partial (Pro164). A 4-hydroxyproline mark is found at Pro165, Pro174, Pro177, and Pro180. A compositionally biased stretch (low complexity) spans 168–182 (IGSTGSPGFPGTPGS). Lys183 and Lys192 each carry 5-hydroxylysine. O-linked (Gal...) hydroxylysine glycosylation is present at Lys192. A 4-hydroxyproline mark is found at Pro207, Pro216, Pro219, Pro228, and Pro237. The segment covering 227 to 249 (EPGASGESGLPGPSGFPGPRGMP) has biased composition (low complexity). Pro243 carries the 4-hydroxyproline; partial modification. 4-hydroxyproline is present on residues Pro249 and Pro255. Gly residues predominate over residues 259–268 (GAKGDGGPTG). The residue at position 261 (Lys261) is a 5-hydroxylysine. O-linked (Gal...) hydroxylysine glycosylation occurs at Lys261. 4-hydroxyproline; partial occurs at positions 273 and 276. Lys279 carries the post-translational modification 5-hydroxylysine. The O-linked (Gal...) hydroxylysine glycan is linked to Lys279. Residues Pro285, Pro291, and Pro303 each carry the 4-hydroxyproline; partial modification. Pro306, Pro312, Pro321, Pro327, and Pro339 each carry 4-hydroxyproline. Lys342 carries the 5-hydroxylysine modification. At Pro348 the chain carries 4-hydroxyproline; partial. Position 351 is a 5-hydroxylysine; partial (Lys351). A 4-hydroxyproline mark is found at Pro366, Pro372, and Pro375. A compositionally biased stretch (basic and acidic residues) spans 380–396 (RPGKDGRPGIRGKDGKQ). Pro381 carries the post-translational modification 4-hydroxyproline; partial. Pro387 bears the 4-hydroxyproline mark. A compositionally biased stretch (low complexity) spans 398-420 (EQGPQGPQGLAGLQGRAGPPGAR). Pro416 is subject to 3-hydroxyproline; partial. A 4-hydroxyproline mark is found at Pro417, Pro423, Pro429, and Pro432. The segment covering 437 to 446 (EQGDAGKDGE) has biased composition (basic and acidic residues). Over residues 447-480 (TGAAGPPGAAGPTGARGPPGPRGQQGFQGLAGAQ) the composition is skewed to low complexity. 3 positions are modified to 4-hydroxyproline: Pro453, Pro465, and Pro483. Residues Pro500, Pro503, and Pro506 each carry the 4-hydroxyproline; partial modification. The segment covering 502 to 511 (GPAGPGGERG) has biased composition (gly residues). Pro513 and Pro525 each carry 4-hydroxyproline. Positions 527-543 (ERGATGPAGPTGSPGVA) are enriched in low complexity. 4-hydroxyproline; partial is present on residues Pro533 and Pro536. Pro540 bears the 4-hydroxyproline mark. Lys546 carries the post-translational modification 5-hydroxylysine. Pro551 bears the 3-hydroxyproline; partial mark. 4-hydroxyproline is present on residues Pro552 and Pro561. Lys567 and Lys573 each carry 5-hydroxylysine. O-linked (Gal...) hydroxylysine glycosylation is present at Lys573. A compositionally biased stretch (basic and acidic residues) spans 575 to 599 (SRGDIGPRGKAGERGKDGERGERGE). Pro603 is subject to 4-hydroxyproline. The residue at position 612 (Lys612) is a 5-hydroxylysine. An O-linked (Gal...) hydroxylysine glycan is attached at Lys612. Pro621 is modified (4-hydroxyproline; partial). Pro627 bears the 4-hydroxyproline mark. Residues 635-644 (PAGSQGIQGQ) are compositionally biased toward low complexity. At Pro645 the chain carries 4-hydroxyproline; partial. 3-hydroxyproline; partial is present on Pro647. Pro648 bears the 4-hydroxyproline mark. At Lys657 the chain carries 5-hydroxylysine. Lys657 carries an O-linked (Gal...) hydroxylysine glycan. A 4-hydroxyproline mark is found at Pro663, Pro708, Pro711, Pro714, Pro717, and Pro723. Low complexity predominate over residues 698–710 (ETGAQGEIGLPGS). A compositionally biased stretch (pro residues) spans 714-726 (PGLPGPSGQPGPS). Lys738 bears the 5-hydroxylysine mark. O-linked (Gal...) hydroxylysine glycosylation occurs at Lys738. 4-hydroxyproline occurs at positions 744 and 759. A compositionally biased stretch (basic and acidic residues) spans 750 to 771 (QGDRGSDGEPGRDGTKGERGED). Lys765 is modified (5-hydroxylysine). The O-linked (Gal...) hydroxylysine glycan is linked to Lys765. Pro773 carries the post-translational modification 3-hydroxyproline; partial. Pro774, Pro783, and Pro792 each carry 4-hydroxyproline. A compositionally biased stretch (gly residues) spans 802 to 814 (GPMGGQGMKGDGG). The residue at position 810 (Lys810) is a 5-hydroxylysine. Lys810 carries an O-linked (Gal...) hydroxylysine glycan. Residue Pro815 is modified to 3-hydroxyproline; partial. 10 positions are modified to 4-hydroxyproline: Pro816, Pro843, Pro849, Pro855, Pro861, Pro867, Pro888, Pro894, Pro903, and Pro915. The segment covering 828–848 (AGPQGPTGPSGQAGAPGQEGA) has biased composition (low complexity). Residues 884 to 894 (QRGLPGAAGPP) are compositionally biased toward low complexity. Residues 911–927 (PVGAPGSQGPAGIMGMK) are compositionally biased toward low complexity. Residue Lys927 is modified to 5-hydroxylysine. Lys927 carries an O-linked (Gal...) hydroxylysine glycan. 5-hydroxylysine; partial is present on Lys933. Lys936 and Lys939 each carry 5-hydroxylysine. A glycan (O-linked (Gal...) hydroxylysine) is linked at Lys936. Residues 942–962 (TGLPGLQGLQGTPGHSGESGP) show a composition bias toward low complexity. A 4-hydroxyproline modification is found at Pro945. The residue at position 954 (Pro954) is a 4-hydroxyproline; partial. A 4-hydroxyproline mark is found at Pro963 and Pro966. The span at 973-982 (GEAGGRGSQG) shows a compositional bias: gly residues. Over residues 983–1001 (PPGKDGQPGPSGRVGPRGP) the composition is skewed to low complexity. 4-hydroxyproline occurs at positions 984 and 990. Residue Pro1010 is modified to 3-hydroxyproline; partial. A compositionally biased stretch (pro residues) spans 1010–1020 (PPGPPGPPGPP). At Pro1011 the chain carries 4-hydroxyproline. Pro1013 is subject to 3-hydroxyproline; partial. Pro1014 is subject to 4-hydroxyproline. Pro1016 is modified (3-hydroxyproline; partial). At Pro1017 the chain carries 4-hydroxyproline. A 3-hydroxyproline; partial modification is found at Pro1019. Pro1020 bears the 4-hydroxyproline mark. A nonhelical region (C-terminal) region spans residues 1024–1027 (DYGA).

In terms of assembly, homotetramer.

The protein resides in the secreted. The protein localises to the extracellular space. Its subcellular location is the extracellular matrix. In terms of biological role, fibril-forming collagen. The chain is Fibril-forming collagen alpha chain from Riftia pachyptila (Vent tube worm).